The following is a 243-amino-acid chain: MTVYNDIIEKLKRKKIHMTLIDPASQDIESSGRIAEAAERAGTDFIMIGGSTRINSELMDKTIGAIKSKTSLKTIIFPGSPEMISPRADAIYYMSLMNSRNIDFIIGHQVKTSLFLRQLAIETIPMAYLIFEPGMTVGRVGEANLIKRDDSDTALLYALAAETFGMKLVYLESGSGSPTYVSENVIKKIKEYVKIPVIVGGGIRDKNAAEKLAAAGADIIVTGTIVERSRNVYEALQEIISSI.

Mg(2+) is bound by residues D22 and S51. Residues 170 to 176, 201 to 202, and 223 to 224 contribute to the sn-glycerol 1-phosphate site; these read YLESGSG, GG, and GT.

This sequence belongs to the GGGP/HepGP synthase family. Group II subfamily. Mg(2+) serves as cofactor.

It is found in the cytoplasm. The enzyme catalyses sn-glycerol 1-phosphate + (2E,6E,10E)-geranylgeranyl diphosphate = sn-3-O-(geranylgeranyl)glycerol 1-phosphate + diphosphate. It functions in the pathway membrane lipid metabolism; glycerophospholipid metabolism. In terms of biological role, prenyltransferase that catalyzes the transfer of the geranylgeranyl moiety of geranylgeranyl diphosphate (GGPP) to the C3 hydroxyl of sn-glycerol-1-phosphate (G1P). This reaction is the first ether-bond-formation step in the biosynthesis of archaeal membrane lipids. The polypeptide is Geranylgeranylglyceryl phosphate synthase (Picrophilus torridus (strain ATCC 700027 / DSM 9790 / JCM 10055 / NBRC 100828 / KAW 2/3)).